We begin with the raw amino-acid sequence, 170 residues long: Der GTPase-activating protein YihI (170 aa).

2 disordered regions span residues 1–96 (MKKP…LSPQ) and 145–170 (LSYD…RGGN). Basic and acidic residues predominate over residues 20 to 30 (TREELNQEARD). Over residues 31–40 (RKRLKKHRGH) the composition is skewed to basic residues. Over residues 147-159 (YDDEEDEEEDEKQ) the composition is skewed to acidic residues.

This sequence belongs to the YihI family. Interacts with Der.

Its function is as follows. A GTPase-activating protein (GAP) that modifies Der/EngA GTPase function. May play a role in ribosome biogenesis. This is Der GTPase-activating protein YihI from Salmonella arizonae (strain ATCC BAA-731 / CDC346-86 / RSK2980).